The primary structure comprises 170 residues: Superoxide dismutase [Fe] (170 aa).

Fe cation is bound by residues His27, His81, Asp163, and His167.

Belongs to the iron/manganese superoxide dismutase family. Homodimer. The cofactor is Fe cation.

The enzyme catalyses 2 superoxide + 2 H(+) = H2O2 + O2. Its function is as follows. Destroys superoxide anion radicals which are normally produced within the cells and which are toxic to biological systems. This is Superoxide dismutase [Fe] (sodA) from Raoultella planticola (Klebsiella planticola).